The primary structure comprises 1063 residues: Valine--tRNA ligase, mitochondrial (1063 aa).

The transit peptide at 1-26 directs the protein to the mitochondrion; sequence MPHLPLASFRPPFWGLRHSRGLPRFH. The interval 25 to 53 is disordered; the sequence is FHSVSTQSEPHGSPISRRNREAKQKRLRE. Basic and acidic residues predominate over residues 42–53; the sequence is RNREAKQKRLRE. A 'HIGH' region motif is present at residues 146-156; sequence PNVTGSLHIGH. A 'KMSKS' region motif is present at residues 658–662; sequence KMSKS. Residue lysine 661 coordinates ATP.

The protein belongs to the class-I aminoacyl-tRNA synthetase family.

It localises to the mitochondrion. The catalysed reaction is tRNA(Val) + L-valine + ATP = L-valyl-tRNA(Val) + AMP + diphosphate. Functionally, catalyzes the attachment of valine to tRNA(Val) in a two-step reaction: valine is first activated by ATP to form Val-AMP and then transferred to the acceptor end of tRNA(Val). In Homo sapiens (Human), this protein is Valine--tRNA ligase, mitochondrial (VARS2).